A 1250-amino-acid polypeptide reads, in one-letter code: DNA-directed RNA polymerase subunit beta'' (1250 aa).

The Zn(2+) site is built by C224, C314, C321, and C324.

Belongs to the RNA polymerase beta' chain family. RpoC2 subfamily. As to quaternary structure, in plastids the minimal PEP RNA polymerase catalytic core is composed of four subunits: alpha, beta, beta', and beta''. When a (nuclear-encoded) sigma factor is associated with the core the holoenzyme is formed, which can initiate transcription. Requires Zn(2+) as cofactor.

The protein localises to the plastid. It is found in the chloroplast. The catalysed reaction is RNA(n) + a ribonucleoside 5'-triphosphate = RNA(n+1) + diphosphate. Functionally, DNA-dependent RNA polymerase catalyzes the transcription of DNA into RNA using the four ribonucleoside triphosphates as substrates. The polypeptide is DNA-directed RNA polymerase subunit beta'' (Staurastrum punctulatum (Green alga)).